The chain runs to 147 residues: TRAP-T-associated universal stress protein TeaD (147 aa).

ATP contacts are provided by residues Pro-8–Asp-10, Val-38, Gly-117–Asn-122, and Ser-131–Ala-133.

Belongs to the universal stress protein A family. Homodimer or homotetramer; in equilibrium. The dimer/tetramer ratio is ATP-dependent. ATP stabilizes dimer-dimer complexes, with one ATP molecule bound to each monomer.

Its subcellular location is the cytoplasm. Functionally, ATP-binding protein that negatively regulates activity of the tripartite ATP-independent periplasmic (TRAP) ectoine transport system TeaABC. May regulate uptake according to the ATP status of the cell. This Halomonas elongata (strain ATCC 33173 / DSM 2581 / NBRC 15536 / NCIMB 2198 / 1H9) protein is TRAP-T-associated universal stress protein TeaD (teaD).